The following is a 211-amino-acid chain: Thiamine-phosphate synthase (211 aa).

4-amino-2-methyl-5-(diphosphooxymethyl)pyrimidine is bound by residues 37-41 and Asn69; that span reads QLRIK. Mg(2+) contacts are provided by Asp70 and Asp89. Position 108 (Ser108) interacts with 4-amino-2-methyl-5-(diphosphooxymethyl)pyrimidine. A 2-[(2R,5Z)-2-carboxy-4-methylthiazol-5(2H)-ylidene]ethyl phosphate-binding site is contributed by 134–136; it reads TQT. Residue Lys137 participates in 4-amino-2-methyl-5-(diphosphooxymethyl)pyrimidine binding. Residues Gly166 and 186–187 each bind 2-[(2R,5Z)-2-carboxy-4-methylthiazol-5(2H)-ylidene]ethyl phosphate; that span reads VS.

The protein belongs to the thiamine-phosphate synthase family. The cofactor is Mg(2+).

It catalyses the reaction 2-[(2R,5Z)-2-carboxy-4-methylthiazol-5(2H)-ylidene]ethyl phosphate + 4-amino-2-methyl-5-(diphosphooxymethyl)pyrimidine + 2 H(+) = thiamine phosphate + CO2 + diphosphate. It carries out the reaction 2-(2-carboxy-4-methylthiazol-5-yl)ethyl phosphate + 4-amino-2-methyl-5-(diphosphooxymethyl)pyrimidine + 2 H(+) = thiamine phosphate + CO2 + diphosphate. The catalysed reaction is 4-methyl-5-(2-phosphooxyethyl)-thiazole + 4-amino-2-methyl-5-(diphosphooxymethyl)pyrimidine + H(+) = thiamine phosphate + diphosphate. The protein operates within cofactor biosynthesis; thiamine diphosphate biosynthesis; thiamine phosphate from 4-amino-2-methyl-5-diphosphomethylpyrimidine and 4-methyl-5-(2-phosphoethyl)-thiazole: step 1/1. Its function is as follows. Condenses 4-methyl-5-(beta-hydroxyethyl)thiazole monophosphate (THZ-P) and 2-methyl-4-amino-5-hydroxymethyl pyrimidine pyrophosphate (HMP-PP) to form thiamine monophosphate (TMP). The protein is Thiamine-phosphate synthase of Salmonella schwarzengrund (strain CVM19633).